A 445-amino-acid chain; its full sequence is Phosphoglucosamine mutase (445 aa).

Residue S102 is the Phosphoserine intermediate of the active site. Mg(2+) is bound by residues S102, D241, D243, and D245. S102 is subject to Phosphoserine.

This sequence belongs to the phosphohexose mutase family. It depends on Mg(2+) as a cofactor. In terms of processing, activated by phosphorylation.

The enzyme catalyses alpha-D-glucosamine 1-phosphate = D-glucosamine 6-phosphate. In terms of biological role, catalyzes the conversion of glucosamine-6-phosphate to glucosamine-1-phosphate. This chain is Phosphoglucosamine mutase, found in Shewanella sp. (strain W3-18-1).